Here is a 336-residue protein sequence, read N- to C-terminus: Galactose/methyl galactoside import permease protein MglC (336 aa).

The next 8 membrane-spanning stretches (helical) occupy residues 17–37 (AIYFVLLILLGIIIAQDPTFL), 53–73 (LIIALGVAGLLITQGTDLSAG), 107–127 (VVILAVCAIGAVIGLVNGLVI), 128–148 (AYLNVTPFIATMGTMIIIYGF), 181–201 (FKLSYITIYAAIAALLVWIMW), 231–251 (LVAIYMIAGMFYAFGGMLEAG), 257–277 (TNNLGFMYELDAIAACVVGGV), and 306–326 (IGVNPYWQYIIKGSIIILAVA).

This sequence belongs to the binding-protein-dependent transport system permease family. AraH/RbsC subfamily. As to quaternary structure, the complex is composed of one ATP-binding protein (MglA), two transmembrane proteins (MglC) and a solute-binding protein (MglB).

The protein resides in the cell inner membrane. Functionally, part of the ABC transporter complex MglABC involved in galactose/methyl galactoside import. Probably responsible for the translocation of the substrate across the membrane. The sequence is that of Galactose/methyl galactoside import permease protein MglC (mglC) from Haemophilus influenzae (strain ATCC 51907 / DSM 11121 / KW20 / Rd).